A 289-amino-acid polypeptide reads, in one-letter code: Segregation and condensation protein A (289 aa).

Positions 1 to 18 (MSEDRRSPTDEAPREGEL) are enriched in basic and acidic residues. Residues 1 to 24 (MSEDRRSPTDEAPREGELPRSPGD) are disordered.

This sequence belongs to the ScpA family. As to quaternary structure, component of the Structural Maintenance of Chromosome (SMC) condensin-like complex composed of ScpA, ScpB and the Smc homodimer. ScpA and ScpB bind to the head domain of Smc. The presence of the three proteins is required for the association of the complex with DNA.

Its subcellular location is the cytoplasm. A conditionally essential component of the chromosome segregation machinery. Participates in chromosomal partition during cell division. Important for positioning of ParB-parS complexes (ori of replication) and of the ter replication site, as well as for segration of the ParB-parS complex and thus chromosome segregation. May act via the formation of a condensin-like complex containing Smc, ScpA and ScpB that pulls DNA away from mid-cell into both cell halves. In Myxococcus xanthus (strain DK1622), this protein is Segregation and condensation protein A.